The chain runs to 1559 residues: Bile pigment transporter 1 (1559 aa).

The Vacuolar portion of the chain corresponds to 1-29; the sequence is MSSLEVVDGCPYGYRPYPDSGTNALNPCF. A helical transmembrane segment spans residues 30-50; that stretch reads ISVISAWQAVFFLLIGSYQLW. Residues 51–84 lie on the Cytoplasmic side of the membrane; sequence KLYKNNKVPPRFKNFPTLPSKINSRHLTHLTNVC. Residues 85-105 form a helical membrane-spanning segment; sequence FQSTLIICELALVSQSSDRVY. The Vacuolar portion of the chain corresponds to 106–110; sequence PFILK. A helical transmembrane segment spans residues 111 to 127; sequence KALYLNLLFNLGISLPT. The Cytoplasmic portion of the chain corresponds to 128–139; the sequence is QYLAYFKSTFSM. A helical membrane pass occupies residues 140–160; that stretch reads GNQLFYYMFQILLQLFLILQR. Topologically, residues 161–178 are vacuolar; the sequence is YYHGSSNERLTVISGQTA. The chain crosses the membrane as a helical span at residues 179–199; that stretch reads MILEVLLLFNSVAIFIYDLCI. Residues 200–283 are Cytoplasmic-facing; that stretch reads FEPINELSEY…WLNRNSLWRA (84 aa). The helical transmembrane segment at 284–304 threads the bilayer; the sequence is IWKSFGRTISVAMLYETTSDL. In terms of domain architecture, ABC transmembrane type-1 1 spans 292-578; the sequence is ISVAMLYETT…VPSMINTIIE (287 aa). The Vacuolar segment spans residues 305–333; the sequence is LSVVQPQFLRIFIDGLNPETSSKYPPLNG. A helical membrane pass occupies residues 334–354; the sequence is VFIALTLFVISVVSVFLTNQF. At 355–410 the chain is on the cytoplasmic side; it reads YIGIFEAGLGIRGSLASLVYQKSLRLTLAERNEKSTGDILNLMSVDVLRIQRFFEN. A helical membrane pass occupies residues 411-431; sequence AQTIIGAPIQIIVVLTSLYWL. At 432–434 the chain is on the vacuolar side; sequence LGK. Residues 435–455 form a helical membrane-spanning segment; it reads AVIGGLVTMAIMMPINAFLSR. At 456–518 the chain is on the cytoplasmic side; that stretch reads KVKKLSKTQM…NFRKIGIVSN (63 aa). A helical membrane pass occupies residues 519–539; it reads LIYFAWNCVPLMVTCSTFGLF. Residues 540–560 lie on the Vacuolar side of the membrane; the sequence is SLFSDSPLSPAIVFPSLSLFN. Residues 561–581 form a helical membrane-spanning segment; that stretch reads ILNSAIYSVPSMINTIIETSV. Residues 582–972 lie on the Cytoplasmic side of the membrane; that stretch reads SMERLKSFLL…VKTKIYLAYI (391 aa). An ABC transporter 1 domain is found at 639–871; the sequence is LRTDEESIIG…KNNTSKLKKL (233 aa). Serine 645 carries the phosphoserine modification. 672-679 contributes to the ATP binding site; sequence GRVGAGKS. The tract at residues 877–899 is disordered; the sequence is SPIDNGNESDVQTEHRSESEVDE. A Phosphoserine modification is found at serine 885. The residue at position 889 (threonine 889) is a Phosphothreonine. 2 positions are modified to phosphoserine: serine 893 and serine 895. Threonine 916 is modified (phosphothreonine). 2 positions are modified to phosphoserine: serine 927 and serine 931. Threonine 934 carries the phosphothreonine modification. The helical transmembrane segment at 973–993 threads the bilayer; sequence KACGVLGVVLFFLFMILTRVF. Positions 980–1265 constitute an ABC transmembrane type-1 2 domain; it reads VVLFFLFMIL…IVRTTVTIET (286 aa). Topologically, residues 994–1030 are vacuolar; that stretch reads DLAENFWLKYWSESNEKNGSNERVWMFVGVYSLIGVA. N-linked (GlcNAc...) asparagine glycosylation is present at asparagine 1011. A helical membrane pass occupies residues 1031–1052; the sequence is SAAFNNLRSIMMLLYCSIRGSK. Residues 1053–1095 lie on the Cytoplasmic side of the membrane; the sequence is KLHESMAKSVIRSPMTFFETTPVGRIINRFSSDMDAVDSNLQY. Residues 1096–1116 traverse the membrane as a helical segment; it reads IFSFFFKSILTYLVTVILVGY. Asparagine 1117 is a topological domain (vacuolar). A helical transmembrane segment spans residues 1118-1138; that stretch reads MPWFLVFNMFLVVIYIYYQTF. Over 1139–1209 the chain is Cytoplasmic; it reads YIVLSRELKR…STNRWLSVRL (71 aa). The helical transmembrane segment at 1210–1230 threads the bilayer; it reads QTIGATIVLATAILALATMNT. The Vacuolar portion of the chain corresponds to 1231-1235; sequence KRQLS. A helical transmembrane segment spans residues 1236 to 1256; sequence SGMVGLLMSYSLEVTGSLTWI. Residues 1257–1559 lie on the Cytoplasmic side of the membrane; sequence VRTTVTIETN…SLCEKGGYLK (303 aa). The ABC transporter 2 domain occupies 1302-1553; sequence IEFKNYSTKY…KTSIFYSLCE (252 aa). Position 1336 to 1343 (1336 to 1343) interacts with ATP; sequence GRTGAGKS. Over residues 1420–1433 the composition is skewed to basic and acidic residues; that stretch reads HLEKMLHSKPRGDD. A disordered region spans residues 1420–1439; the sequence is HLEKMLHSKPRGDDSNEEDG.

This sequence belongs to the ABC transporter superfamily.

The protein localises to the vacuole membrane. Functionally, cooperates for the ATP-dependent vacuolar transport of bilirubin and glutathione conjugates. The protein is Bile pigment transporter 1 (BPT1) of Saccharomyces cerevisiae (strain ATCC 204508 / S288c) (Baker's yeast).